Here is a 338-residue protein sequence, read N- to C-terminus: Lipoate-protein ligase A (338 aa).

Residues 29 to 216 form the BPL/LPL catalytic domain; it reads PATQRVLFLW…AFFAHYGERV (188 aa). Residues arginine 71, 76–79, and lysine 134 each bind ATP; that span reads GAVF. Lysine 134 provides a ligand contact to (R)-lipoate.

Belongs to the LplA family. As to quaternary structure, monomer.

Its subcellular location is the cytoplasm. The catalysed reaction is L-lysyl-[lipoyl-carrier protein] + (R)-lipoate + ATP = N(6)-[(R)-lipoyl]-L-lysyl-[lipoyl-carrier protein] + AMP + diphosphate + H(+). It participates in protein modification; protein lipoylation via exogenous pathway; protein N(6)-(lipoyl)lysine from lipoate: step 1/2. Its pathway is protein modification; protein lipoylation via exogenous pathway; protein N(6)-(lipoyl)lysine from lipoate: step 2/2. In terms of biological role, catalyzes both the ATP-dependent activation of exogenously supplied lipoate to lipoyl-AMP and the transfer of the activated lipoyl onto the lipoyl domains of lipoate-dependent enzymes. The protein is Lipoate-protein ligase A of Escherichia coli O139:H28 (strain E24377A / ETEC).